The primary structure comprises 188 residues: Apolipoprotein M (188 aa).

A signal peptide (not cleaved) is located at residues 1–22 (MFHQIWAALLYLYGILLNSIYQ). Disulfide bonds link Cys-23–Cys-167, Cys-95–Cys-183, and Cys-128–Cys-157. Tetradecanoate contacts are provided by Glu-136 and Arg-143.

The protein belongs to the calycin superfamily. Lipocalin family. Highly divergent. As to quaternary structure, interacts with LRP2; LRP2 mediates APOM renal uptake and subsequent lysosomal degradation.

It localises to the secreted. Its function is as follows. Probably involved in lipid transport. Can bind sphingosine-1-phosphate, myristic acid, palmitic acid and stearic acid, retinol, all-trans-retinoic acid and 9-cis-retinoic acid. In Sus scrofa (Pig), this protein is Apolipoprotein M (APOM).